Here is a 201-residue protein sequence, read N- to C-terminus: Diadenylate cyclase CdaS (201 aa).

Residues 54-201 (QTLAATYYIQ…LNGILYTISL (148 aa)) form the DAC domain.

The protein belongs to the adenylate cyclase family. DacB/CdaS subfamily. In terms of assembly, probably forms a homohexamer. Mg(2+) serves as cofactor.

The catalysed reaction is 2 ATP = 3',3'-c-di-AMP + 2 diphosphate. Functionally, one of 3 paralogous diadenylate cyclases (DAC) in this bacteria catalyzing the condensation of 2 ATP molecules into cyclic di-AMP (c-di-AMP). It has slow DAC activity with ADP as a substrate and may have weak ADPase activity. Required for efficient spore formation, whereas in B.subtilis, it is required for efficient spore germination. It is produced under the control of different sigma factors in the two bacteria. It is also required for parasporal crystal formation. The polypeptide is Diadenylate cyclase CdaS (Bacillus thuringiensis (strain BMB171)).